A 261-amino-acid polypeptide reads, in one-letter code: uncharacterized protein (261 aa).

Helical transmembrane passes span Phe-38–Leu-58, Tyr-134–Ile-154, Ile-163–Leu-183, Tyr-195–Leu-215, and His-219–Val-239.

Its subcellular location is the membrane. This is an uncharacterized protein from Dictyostelium discoideum (Social amoeba).